The primary structure comprises 118 residues: Large ribosomal subunit protein bL19 (118 aa).

This sequence belongs to the bacterial ribosomal protein bL19 family.

Functionally, this protein is located at the 30S-50S ribosomal subunit interface and may play a role in the structure and function of the aminoacyl-tRNA binding site. This is Large ribosomal subunit protein bL19 from Campylobacter jejuni subsp. doylei (strain ATCC BAA-1458 / RM4099 / 269.97).